The sequence spans 503 residues: MDFSIKPLDAKSTIASIKTGCIAVAVFEDKKLSAAAQALDQKGGISAALKSGDISGKAGSTLLLRGVSGVAAERVLLVGLGKEDPVSEKDFSSAVQAVARAFTSLGATEAVIALPLDAVAARDAAWSIRCTILNTRDASYRFDSLKSKKEPAPAGVKKIVFAVSAASTAIAKDAIAQAVAQANGIDLTKDLGNLPANVCTPTYLANTAKKMAKEFKLQVEVLDRKQLQALKMGSFLSVTNGSVEPPKFIVLKHMGGKAKDAPVVLVGKGITFDSGGISLKPGAAMDEMKYDMGGAASVLGTMRAIAELKLKLNVIVVIPTCENMPSGSATKPGDIVTSMSGQTIEVLNTDAEGRLVLCDALTYVERFKPAAVIDVATLTGACITALGHHNSGLFTRSDDAHDALANELLAAGKASGDTAWRMPIEDSYQEQLKSNFADMANIGGPAGGAVTAACFLERYTKKYTWAHLDIAGTAWKSGAAKGSTGRPVPLLTSFLIQRAQTAR.

Mn(2+) is bound by residues lysine 268 and aspartate 273. Residue lysine 280 is part of the active site. Mn(2+) is bound by residues aspartate 291, aspartate 350, and glutamate 352. The active site involves arginine 354.

It belongs to the peptidase M17 family. Mn(2+) serves as cofactor.

It is found in the cytoplasm. It catalyses the reaction Release of an N-terminal amino acid, Xaa-|-Yaa-, in which Xaa is preferably Leu, but may be other amino acids including Pro although not Arg or Lys, and Yaa may be Pro. Amino acid amides and methyl esters are also readily hydrolyzed, but rates on arylamides are exceedingly low.. The catalysed reaction is Release of an N-terminal amino acid, preferentially leucine, but not glutamic or aspartic acids.. In terms of biological role, presumably involved in the processing and regular turnover of intracellular proteins. Catalyzes the removal of unsubstituted N-terminal amino acids from various peptides. In Herminiimonas arsenicoxydans, this protein is Probable cytosol aminopeptidase.